The following is a 180-amino-acid chain: Pro-glucagon (180 aa).

Positions 1 to 20 (MKSIYFVAGLFVMLVQGSWQ) are cleaved as a signal peptide. Residues 26–59 (TEEKSRSFSASQADPLSDPDQMNEDKRHSQGTFT) form a disordered region. The residue at position 54 (Ser54) is a Phosphoserine. A propeptide spanning residues 84 to 89 (NRNNIA) is cleaved from the precursor. Ser105 and Ser108 each carry phosphoserine. Arg127 carries the post-translational modification Arginine amide. Residues 131–145 (DFPEEVAIVEELGRR) constitute a propeptide that is removed on maturation. Ser150 and Ser152 each carry phosphoserine.

It belongs to the glucagon family. Post-translationally, proglucagon is post-translationally processed in a tissue-specific manner in pancreatic A cells and intestinal L cells. In pancreatic A cells, the major bioactive hormone is glucagon cleaved by PCSK2/PC2. In the intestinal L cells PCSK1/PC1 liberates GLP-1, GLP-2, glicentin and oxyntomodulin. GLP-1 is further N-terminally truncated by post-translational processing in the intestinal L cells resulting in GLP-1(7-37) GLP-1-(7-36)amide. The C-terminal amidation is neither important for the metabolism of GLP-1 nor for its effects on the endocrine pancreas. In terms of tissue distribution, secreted in the A cells of the islets of Langerhans. Secreted in the A cells of the islets of Langerhans. Secreted from enteroendocrine L cells throughout the gastrointestinal tract. Also secreted in selected neurons in the brain. As to expression, secreted from enteroendocrine cells throughout the gastrointestinal tract. Also secreted in selected neurons in the brain. In terms of tissue distribution, secreted from enteroendocrine cells throughout the gastrointestinal tract.

The protein resides in the secreted. Plays a key role in glucose metabolism and homeostasis. Regulates blood glucose by increasing gluconeogenesis and decreasing glycolysis. A counterregulatory hormone of insulin, raises plasma glucose levels in response to insulin-induced hypoglycemia. Plays an important role in initiating and maintaining hyperglycemic conditions in diabetes. Functionally, potent stimulator of glucose-dependent insulin release. Also stimulates insulin release in response to IL6. Plays important roles on gastric motility and the suppression of plasma glucagon levels. May be involved in the suppression of satiety and stimulation of glucose disposal in peripheral tissues, independent of the actions of insulin. Has growth-promoting activities on intestinal epithelium. May also regulate the hypothalamic pituitary axis (HPA) via effects on LH, TSH, CRH, oxytocin, and vasopressin secretion. Increases islet mass through stimulation of islet neogenesis and pancreatic beta cell proliferation. Inhibits beta cell apoptosis. In terms of biological role, stimulates intestinal growth and up-regulates villus height in the small intestine, concomitant with increased crypt cell proliferation and decreased enterocyte apoptosis. The gastrointestinal tract, from the stomach to the colon is the principal target for GLP-2 action. Plays a key role in nutrient homeostasis, enhancing nutrient assimilation through enhanced gastrointestinal function, as well as increasing nutrient disposal. Stimulates intestinal glucose transport and decreases mucosal permeability. Its function is as follows. Significantly reduces food intake. Inhibits gastric emptying in humans. Suppression of gastric emptying may lead to increased gastric distension, which may contribute to satiety by causing a sensation of fullness. May modulate gastric acid secretion and the gastro-pyloro-duodenal activity. May play an important role in intestinal mucosal growth in the early period of life. The chain is Pro-glucagon from Homo sapiens (Human).